The chain runs to 1059 residues: Nonsense-mediated mRNA decay factor SMG7 (1059 aa).

2 TPR repeats span residues 149-183 (DQQS…LGDL) and 184-217 (ARYK…WPAS). A compositionally biased stretch (polar residues) spans 806–817 (SHVSPAHSQSTS). Disordered regions lie at residues 806–826 (SHVS…KWSP), 927–955 (HLGP…SGNN), 987–1015 (SGKP…QVPT), and 1040–1059 (STQL…RHFV).

Interacts with EXA1. Expressed in flowers and at lower levels in stems and leaves.

The protein localises to the cytoplasm. It is found in the P-body. Its function is as follows. Plays multiple roles in growth and development. Involved in nonsense-mediated mRNA decay (NMD). May provide a link to the mRNA degradation machinery to initiate NMD and serve as an adapter for UPF proteins function. Required for meiotic progression through anaphase II of pollen mother cells. May counteract cyclin-dependent kinase (CDK) activity at the end of meiosis. May play a role in plant defense through its involvement in NMD. Together with EXA1, helps to restrict cell death induction during pathogen infection in a salicylic acid- (SA) and reactive oxygen species- (ROS) independent manner. The protein is Nonsense-mediated mRNA decay factor SMG7 of Arabidopsis thaliana (Mouse-ear cress).